The primary structure comprises 231 residues: 2-C-methyl-D-erythritol 4-phosphate cytidylyltransferase (231 aa).

Belongs to the IspD/TarI cytidylyltransferase family. IspD subfamily.

It carries out the reaction 2-C-methyl-D-erythritol 4-phosphate + CTP + H(+) = 4-CDP-2-C-methyl-D-erythritol + diphosphate. Its pathway is isoprenoid biosynthesis; isopentenyl diphosphate biosynthesis via DXP pathway; isopentenyl diphosphate from 1-deoxy-D-xylulose 5-phosphate: step 2/6. Catalyzes the formation of 4-diphosphocytidyl-2-C-methyl-D-erythritol from CTP and 2-C-methyl-D-erythritol 4-phosphate (MEP). In Xylella fastidiosa (strain M23), this protein is 2-C-methyl-D-erythritol 4-phosphate cytidylyltransferase.